The following is a 393-amino-acid chain: 4-hydroxyphenylpyruvate dioxygenase (393 aa).

An N-acetylthreonine modification is found at threonine 2. VOC domains follow at residues histidine 18–phenylalanine 152 and isoleucine 180–lysine 338. Histidine 183 contacts Fe cation. Phosphoserine occurs at positions 211, 226, and 250. Fe cation is bound by residues histidine 266 and glutamate 349.

This sequence belongs to the 4HPPD family. As to quaternary structure, homodimer. Fe cation is required as a cofactor. Liver.

Its subcellular location is the cytoplasm. The protein localises to the endoplasmic reticulum membrane. It localises to the golgi apparatus membrane. It catalyses the reaction 3-(4-hydroxyphenyl)pyruvate + O2 = homogentisate + CO2. The protein operates within amino-acid degradation; L-phenylalanine degradation; acetoacetate and fumarate from L-phenylalanine: step 3/6. In terms of biological role, catalyzes the conversion of 4-hydroxyphenylpyruvic acid to homogentisic acid, one of the steps in tyrosine catabolism. The sequence is that of 4-hydroxyphenylpyruvate dioxygenase (HPD) from Sus scrofa (Pig).